A 296-amino-acid chain; its full sequence is Phosphatidylglycerol--prolipoprotein diacylglyceryl transferase (296 aa).

The next 4 helical transmembrane spans lie at 10–30 (IAFSLGPVQVHWYGLMYLAAF), 57–77 (LLFYGMLGVVLGGRIGYMLFY), 92–112 (VWEGGMSFHGGLLGVLIACGL), and 119–139 (LHFFDVMDFVAPLVPLGLGFG). Arginine 140 provides a ligand contact to a 1,2-diacyl-sn-glycero-3-phospho-(1'-sn-glycerol). Helical transmembrane passes span 194–214 (QLYEAALEGVVMFVVLWTFSM), 220–240 (YAVSGLFALLYGVFRFIVEFV), and 255–275 (LTMGQILSLPLIGVGLVLLAL).

This sequence belongs to the Lgt family.

Its subcellular location is the cell inner membrane. The enzyme catalyses L-cysteinyl-[prolipoprotein] + a 1,2-diacyl-sn-glycero-3-phospho-(1'-sn-glycerol) = an S-1,2-diacyl-sn-glyceryl-L-cysteinyl-[prolipoprotein] + sn-glycerol 1-phosphate + H(+). The protein operates within protein modification; lipoprotein biosynthesis (diacylglyceryl transfer). Functionally, catalyzes the transfer of the diacylglyceryl group from phosphatidylglycerol to the sulfhydryl group of the N-terminal cysteine of a prolipoprotein, the first step in the formation of mature lipoproteins. The polypeptide is Phosphatidylglycerol--prolipoprotein diacylglyceryl transferase (Xanthomonas campestris pv. campestris (strain 8004)).